The primary structure comprises 292 residues: Glutamyl-Q tRNA(Asp) synthetase (292 aa).

L-glutamate is bound by residues 9-13 (RFAPS) and Glu-45. Positions 12–22 (PSPSGPLHAGS) match the 'HIGH' region motif. Zn(2+)-binding residues include Cys-99, Cys-101, Tyr-121, and Cys-125. Tyr-184 and Arg-202 together coordinate L-glutamate. The short motif at 240–244 (KLSKQ) is the 'KMSKS' region element. Lys-243 lines the ATP pocket.

The protein belongs to the class-I aminoacyl-tRNA synthetase family. GluQ subfamily. Zn(2+) is required as a cofactor.

Its function is as follows. Catalyzes the tRNA-independent activation of glutamate in presence of ATP and the subsequent transfer of glutamate onto a tRNA(Asp). Glutamate is transferred on the 2-amino-5-(4,5-dihydroxy-2-cyclopenten-1-yl) moiety of the queuosine in the wobble position of the QUC anticodon. In Verminephrobacter eiseniae (strain EF01-2), this protein is Glutamyl-Q tRNA(Asp) synthetase.